Here is a 201-residue protein sequence, read N- to C-terminus: Large ribosomal subunit protein uL4 (201 aa).

The segment at 44–68 is disordered; the sequence is RAQKSRADVSGSGRKPWRQKGTGRA.

This sequence belongs to the universal ribosomal protein uL4 family. As to quaternary structure, part of the 50S ribosomal subunit.

Functionally, one of the primary rRNA binding proteins, this protein initially binds near the 5'-end of the 23S rRNA. It is important during the early stages of 50S assembly. It makes multiple contacts with different domains of the 23S rRNA in the assembled 50S subunit and ribosome. In terms of biological role, forms part of the polypeptide exit tunnel. The chain is Large ribosomal subunit protein uL4 from Buchnera aphidicola subsp. Schizaphis graminum (strain Sg).